The following is a 190-amino-acid chain: Ribosome maturation factor RimM (190 aa).

The PRC barrel domain maps to 114 to 190 (DDEYYWVDLI…CITVDWQPDY (77 aa)).

Belongs to the RimM family. In terms of assembly, binds ribosomal protein uS19.

It localises to the cytoplasm. Functionally, an accessory protein needed during the final step in the assembly of 30S ribosomal subunit, possibly for assembly of the head region. Essential for efficient processing of 16S rRNA. May be needed both before and after RbfA during the maturation of 16S rRNA. It has affinity for free ribosomal 30S subunits but not for 70S ribosomes. This chain is Ribosome maturation factor RimM, found in Acidovorax sp. (strain JS42).